The following is a 261-amino-acid chain: Imidazole glycerol phosphate synthase subunit HisF (261 aa).

Catalysis depends on residues Asp16 and Asp135.

The protein belongs to the HisA/HisF family. As to quaternary structure, heterodimer of HisH and HisF.

The protein resides in the cytoplasm. It carries out the reaction 5-[(5-phospho-1-deoxy-D-ribulos-1-ylimino)methylamino]-1-(5-phospho-beta-D-ribosyl)imidazole-4-carboxamide + L-glutamine = D-erythro-1-(imidazol-4-yl)glycerol 3-phosphate + 5-amino-1-(5-phospho-beta-D-ribosyl)imidazole-4-carboxamide + L-glutamate + H(+). It participates in amino-acid biosynthesis; L-histidine biosynthesis; L-histidine from 5-phospho-alpha-D-ribose 1-diphosphate: step 5/9. IGPS catalyzes the conversion of PRFAR and glutamine to IGP, AICAR and glutamate. The HisF subunit catalyzes the cyclization activity that produces IGP and AICAR from PRFAR using the ammonia provided by the HisH subunit. In Mycobacterium marinum (strain ATCC BAA-535 / M), this protein is Imidazole glycerol phosphate synthase subunit HisF.